The following is a 270-amino-acid chain: MSDLHNESIFITGGGSGLGLALVERFIEEGAQVATLELSAAKVASLRQRFGEHILAVEGNVTCYADYQRAVDQILTRSGKLDCFIGNAGIWDHNASLVNTPAETLETGFHELFNVNVLGYLLGAKACAPALIASEGSMIFTLSNAAWYPGGGGPLYTASKHAATGLIRQLAYELAPKVRVNGVGPCGMASDLRGPQALGQSETSIMQSLTPEKIAAILPLQFFPQPADFTGPYVMLASRRNNRALSGVMINADAGLAIRGIRHVAAGLDL.

10-34 lines the NAD(+) pocket; the sequence is FITGGGSGLGLALVERFIEEGAQVA. Ser-143 serves as a coordination point for substrate. Tyr-156 functions as the Proton acceptor in the catalytic mechanism.

The protein belongs to the short-chain dehydrogenases/reductases (SDR) family.

It carries out the reaction 3-(cis-5,6-dihydroxycyclohexa-1,3-dien-1-yl)propanoate + NAD(+) = 3-(2,3-dihydroxyphenyl)propanoate + NADH + H(+). The catalysed reaction is (2E)-3-(cis-5,6-dihydroxycyclohexa-1,3-dien-1-yl)prop-2-enoate + NAD(+) = (2E)-3-(2,3-dihydroxyphenyl)prop-2-enoate + NADH + H(+). Its pathway is aromatic compound metabolism; 3-phenylpropanoate degradation. Its function is as follows. Converts 3-phenylpropionate-dihydrodiol (PP-dihydrodiol) and cinnamic acid-dihydrodiol (CI-dihydrodiol) into 3-(2,3-dihydroxylphenyl)propanoic acid (DHPP) and 2,3-dihydroxicinnamic acid (DHCI), respectively. The sequence is that of 3-phenylpropionate-dihydrodiol/cinnamic acid-dihydrodiol dehydrogenase from Escherichia coli (strain ATCC 8739 / DSM 1576 / NBRC 3972 / NCIMB 8545 / WDCM 00012 / Crooks).